Consider the following 348-residue polypeptide: D-erythrose-4-phosphate dehydrogenase (348 aa).

NAD(+)-binding positions include 12–13 and R81; that span reads RI. Substrate contacts are provided by residues 154–156, R200, 213–214, and R236; these read SCT and TK. C155 (nucleophile) is an active-site residue. N318 contributes to the NAD(+) binding site.

Belongs to the glyceraldehyde-3-phosphate dehydrogenase family. Epd subfamily. As to quaternary structure, homotetramer.

It localises to the cytoplasm. The catalysed reaction is D-erythrose 4-phosphate + NAD(+) + H2O = 4-phospho-D-erythronate + NADH + 2 H(+). The protein operates within cofactor biosynthesis; pyridoxine 5'-phosphate biosynthesis; pyridoxine 5'-phosphate from D-erythrose 4-phosphate: step 1/5. Functionally, catalyzes the NAD-dependent conversion of D-erythrose 4-phosphate to 4-phosphoerythronate. The protein is D-erythrose-4-phosphate dehydrogenase of Salmonella paratyphi B (strain ATCC BAA-1250 / SPB7).